A 474-amino-acid chain; its full sequence is Putative response regulator NtrX-like (474 aa).

The Response regulatory domain maps to 5–121 (DVLIVDDEES…KLVILLTRAC (117 aa)). A 4-aspartylphosphate modification is found at D54. Residues 143-368 (LVGECSVTLK…LRNVVEWTLI (226 aa)) enclose the Sigma-54 factor interaction domain. Residues 171 to 178 (GKVGSGKE) and 231 to 240 (ANNGTLYIDE) each bind ATP.

Functionally, member of the two-component regulatory system RC0849/RC0948. The sequence is that of Putative response regulator NtrX-like from Rickettsia conorii (strain ATCC VR-613 / Malish 7).